We begin with the raw amino-acid sequence, 529 residues long: F-box/LRR-repeat protein At5g63520 (529 aa).

Residues 1-22 (MAEVSLTKKEMTTKGKSENSKK) form a disordered region. Positions 31-78 (VPIAAMNEDLLHNILLRLPAKSFAFASCVNRFWSSVCNRILSRPKMIS) constitute an F-box domain. 2 LRR repeats span residues 265–288 (GNEP…IFAR) and 418–441 (QVYL…LRNL).

The sequence is that of F-box/LRR-repeat protein At5g63520 from Arabidopsis thaliana (Mouse-ear cress).